Here is a 250-residue protein sequence, read N- to C-terminus: DNA repair protein RecO (250 aa).

It belongs to the RecO family.

Its function is as follows. Involved in DNA repair and RecF pathway recombination. This is DNA repair protein RecO from Staphylococcus aureus (strain COL).